The chain runs to 189 residues: Potassium-transporting ATPase KdpC subunit (189 aa).

Residues 6–26 form a helical membrane-spanning segment; that stretch reads PAILLFIMFTIICGGIYPALV.

The protein belongs to the KdpC family. As to quaternary structure, the system is composed of three essential subunits: KdpA, KdpB and KdpC.

It localises to the cell inner membrane. Part of the high-affinity ATP-driven potassium transport (or Kdp) system, which catalyzes the hydrolysis of ATP coupled with the electrogenic transport of potassium into the cytoplasm. This subunit acts as a catalytic chaperone that increases the ATP-binding affinity of the ATP-hydrolyzing subunit KdpB by the formation of a transient KdpB/KdpC/ATP ternary complex. In Trichlorobacter lovleyi (strain ATCC BAA-1151 / DSM 17278 / SZ) (Geobacter lovleyi), this protein is Potassium-transporting ATPase KdpC subunit.